Consider the following 317-residue polypeptide: Homoserine O-succinyltransferase (317 aa).

Cysteine 142 (acyl-thioester intermediate) is an active-site residue. Residues lysine 163 and serine 192 each coordinate substrate. The Proton acceptor role is filled by histidine 235. Residue glutamate 237 is part of the active site. Arginine 249 serves as a coordination point for substrate.

It belongs to the MetA family.

The protein localises to the cytoplasm. The catalysed reaction is L-homoserine + succinyl-CoA = O-succinyl-L-homoserine + CoA. The protein operates within amino-acid biosynthesis; L-methionine biosynthesis via de novo pathway; O-succinyl-L-homoserine from L-homoserine: step 1/1. In terms of biological role, transfers a succinyl group from succinyl-CoA to L-homoserine, forming succinyl-L-homoserine. The polypeptide is Homoserine O-succinyltransferase (Aeromonas hydrophila subsp. hydrophila (strain ATCC 7966 / DSM 30187 / BCRC 13018 / CCUG 14551 / JCM 1027 / KCTC 2358 / NCIMB 9240 / NCTC 8049)).